Consider the following 452-residue polypeptide: Glycylpeptide N-tetradecanoyltransferase (452 aa).

Tetradecanoyl-CoA is bound by residues 38-41 (YKFW), 171-173 (LCI), and 179-183 (SKRLA). Residue L452 is the Proton acceptor; via carboxylate of the active site.

It belongs to the NMT family. In terms of assembly, monomer.

Its subcellular location is the cytoplasm. It carries out the reaction N-terminal glycyl-[protein] + tetradecanoyl-CoA = N-tetradecanoylglycyl-[protein] + CoA + H(+). In terms of biological role, adds a myristoyl group to the N-terminal glycine residue of certain cellular proteins. The protein is Glycylpeptide N-tetradecanoyltransferase (NMT1) of Eremothecium gossypii (strain ATCC 10895 / CBS 109.51 / FGSC 9923 / NRRL Y-1056) (Yeast).